We begin with the raw amino-acid sequence, 158 residues long: NAD(P)H-quinone oxidoreductase subunit N (158 aa).

This sequence belongs to the complex I NdhN subunit family. NDH-1 can be composed of about 15 different subunits; different subcomplexes with different compositions have been identified which probably have different functions.

The protein localises to the cellular thylakoid membrane. It carries out the reaction a plastoquinone + NADH + (n+1) H(+)(in) = a plastoquinol + NAD(+) + n H(+)(out). The catalysed reaction is a plastoquinone + NADPH + (n+1) H(+)(in) = a plastoquinol + NADP(+) + n H(+)(out). Its function is as follows. NDH-1 shuttles electrons from an unknown electron donor, via FMN and iron-sulfur (Fe-S) centers, to quinones in the respiratory and/or the photosynthetic chain. The immediate electron acceptor for the enzyme in this species is believed to be plastoquinone. Couples the redox reaction to proton translocation, and thus conserves the redox energy in a proton gradient. Cyanobacterial NDH-1 also plays a role in inorganic carbon-concentration. The sequence is that of NAD(P)H-quinone oxidoreductase subunit N from Prochlorococcus marinus (strain AS9601).